The chain runs to 550 residues: Chaperonin GroEL (550 aa).

ATP contacts are provided by residues 30–33, Lys51, 87–91, Gly415, and Asp495; these read TLGP and DGTTT.

It belongs to the chaperonin (HSP60) family. As to quaternary structure, forms a cylinder of 14 subunits composed of two heptameric rings stacked back-to-back. Interacts with the co-chaperonin GroES.

The protein resides in the cytoplasm. The enzyme catalyses ATP + H2O + a folded polypeptide = ADP + phosphate + an unfolded polypeptide.. Together with its co-chaperonin GroES, plays an essential role in assisting protein folding. The GroEL-GroES system forms a nano-cage that allows encapsulation of the non-native substrate proteins and provides a physical environment optimized to promote and accelerate protein folding. The chain is Chaperonin GroEL from Shewanella woodyi (strain ATCC 51908 / MS32).